The sequence spans 496 residues: Maturase K (496 aa).

This sequence belongs to the intron maturase 2 family. MatK subfamily.

It localises to the plastid. The protein localises to the chloroplast. In terms of biological role, usually encoded in the trnK tRNA gene intron. Probably assists in splicing its own and other chloroplast group II introns. In Paeonia suffruticosa (Tree peony), this protein is Maturase K.